The sequence spans 544 residues: Chaperonin GroEL (544 aa).

Residues 29–32, 86–90, Gly-413, 476–478, and Asp-492 contribute to the ATP site; these read TLGP, DGTTT, and NAL.

It belongs to the chaperonin (HSP60) family. Forms a cylinder of 14 subunits composed of two heptameric rings stacked back-to-back. Interacts with the co-chaperonin GroES.

It localises to the cytoplasm. The catalysed reaction is ATP + H2O + a folded polypeptide = ADP + phosphate + an unfolded polypeptide.. Together with its co-chaperonin GroES, plays an essential role in assisting protein folding. The GroEL-GroES system forms a nano-cage that allows encapsulation of the non-native substrate proteins and provides a physical environment optimized to promote and accelerate protein folding. In Desulfitobacterium hafniense (strain DSM 10664 / DCB-2), this protein is Chaperonin GroEL.